Reading from the N-terminus, the 320-residue chain is Malate dehydrogenase (320 aa).

NAD(+) contacts are provided by residues 10–15 (GAGQIG) and aspartate 34. Residues arginine 83 and arginine 89 each contribute to the substrate site. NAD(+) contacts are provided by residues asparagine 96 and 119 to 121 (ITN). Substrate is bound by residues asparagine 121 and arginine 152. The active-site Proton acceptor is histidine 176.

This sequence belongs to the LDH/MDH superfamily. MDH type 3 family.

The catalysed reaction is (S)-malate + NAD(+) = oxaloacetate + NADH + H(+). Functionally, catalyzes the reversible oxidation of malate to oxaloacetate. In Cereibacter sphaeroides (strain ATCC 17025 / ATH 2.4.3) (Rhodobacter sphaeroides), this protein is Malate dehydrogenase.